Reading from the N-terminus, the 51-residue chain is Insulin (51 aa).

Intrachain disulfides connect cysteine 8/cysteine 37, cysteine 20/cysteine 50, and cysteine 36/cysteine 41.

Belongs to the insulin family. In terms of assembly, heterodimer of a B chain and an A chain linked by two disulfide bonds.

It localises to the secreted. Insulin decreases blood glucose concentration. It increases cell permeability to monosaccharides, amino acids and fatty acids. It accelerates glycolysis, the pentose phosphate cycle, and glycogen synthesis in liver. This chain is Insulin, found in Pagrus major (Red sea bream).